The chain runs to 229 residues: Large ribosomal subunit protein uL1 (229 aa).

Belongs to the universal ribosomal protein uL1 family. As to quaternary structure, part of the 50S ribosomal subunit.

In terms of biological role, binds directly to 23S rRNA. The L1 stalk is quite mobile in the ribosome, and is involved in E site tRNA release. Protein L1 is also a translational repressor protein, it controls the translation of the L11 operon by binding to its mRNA. This chain is Large ribosomal subunit protein uL1, found in Streptococcus pyogenes serotype M1.